A 739-amino-acid polypeptide reads, in one-letter code: Probable endo-1,3(4)-beta-glucanase An02g00850 (739 aa).

The N-terminal stretch at 1–24 (MPTSTLLWSVGSLALSSMVLPAAA) is a signal peptide. In terms of domain architecture, GH16 spans 31-283 (ETWKGEDFLT…WAGGVYSTSG (253 aa)). Residues asparagine 59 and asparagine 74 are each glycosylated (N-linked (GlcNAc...) asparagine). Glutamate 140 functions as the Nucleophile in the catalytic mechanism. Residue glutamate 145 is the Proton donor of the active site. N-linked (GlcNAc...) asparagine glycosylation is present at asparagine 396. 3 stretches are compositionally biased toward low complexity: residues 431–442 (SEATEASNSEGS), 452–499 (TGAS…AGAT), and 507–522 (GASG…SAAA). The disordered stretch occupies residues 431 to 718 (SEATEASNSE…TPSTPVFTGG (288 aa)). N-linked (GlcNAc...) asparagine glycans are attached at residues asparagine 459 and asparagine 482. Over residues 523-532 (TPSNVSSTGA) the composition is skewed to polar residues. 2 N-linked (GlcNAc...) asparagine glycosylation sites follow: asparagine 526 and asparagine 537. Positions 539–548 (SEDSSASSEA) are enriched in polar residues. A compositionally biased stretch (low complexity) spans 561-587 (GASAEANGNDSASSNAATASNVSGASA). N-linked (GlcNAc...) asparagine glycosylation is found at asparagine 569, asparagine 581, asparagine 592, and asparagine 620. Residues 597–641 (ASAGANAGSSAAPSSVSGASAEANGSEGSSSHSSGSQAGAHSYGS) show a composition bias toward low complexity. Residues 654–673 (PSSSSHAFATAPSSTGSSRV) are compositionally biased toward polar residues. Residues 674 to 713 (PTSAAAANNAAAATQGSSASGSNSGSSGHGSSSATTPSTP) are compositionally biased toward low complexity. The GPI-anchor amidated glycine moiety is linked to residue glycine 717. Residues 718 to 739 (GANKLTLGASSVLSVLAFALLA) constitute a propeptide, removed in mature form.

It belongs to the glycosyl hydrolase 16 family.

Its subcellular location is the cell membrane. It catalyses the reaction Endohydrolysis of (1-&gt;3)- or (1-&gt;4)-linkages in beta-D-glucans when the glucose residue whose reducing group is involved in the linkage to be hydrolyzed is itself substituted at C-3.. Mixed-linked glucanase involved in the degradation of complex natural cellulosic substrates. The sequence is that of Probable endo-1,3(4)-beta-glucanase An02g00850 from Aspergillus niger (strain ATCC MYA-4892 / CBS 513.88 / FGSC A1513).